Reading from the N-terminus, the 106-residue chain is UPF0145 protein NE1032 (106 aa).

Belongs to the UPF0145 family.

The chain is UPF0145 protein NE1032 from Nitrosomonas europaea (strain ATCC 19718 / CIP 103999 / KCTC 2705 / NBRC 14298).